A 540-amino-acid polypeptide reads, in one-letter code: Light-independent protochlorophyllide reductase subunit B (540 aa).

A [4Fe-4S] cluster-binding site is contributed by aspartate 36. The Proton donor role is filled by aspartate 287. Residue 422–423 participates in substrate binding; that stretch reads GL.

Belongs to the ChlB/BchB/BchZ family. Protochlorophyllide reductase is composed of three subunits; BchL, BchN and BchB. Forms a heterotetramer of two BchB and two BchN subunits. The cofactor is [4Fe-4S] cluster.

The catalysed reaction is chlorophyllide a + oxidized 2[4Fe-4S]-[ferredoxin] + 2 ADP + 2 phosphate = protochlorophyllide a + reduced 2[4Fe-4S]-[ferredoxin] + 2 ATP + 2 H2O. It functions in the pathway porphyrin-containing compound metabolism; bacteriochlorophyll biosynthesis (light-independent). Component of the dark-operative protochlorophyllide reductase (DPOR) that uses Mg-ATP and reduced ferredoxin to reduce ring D of protochlorophyllide (Pchlide) to form chlorophyllide a (Chlide). This reaction is light-independent. The NB-protein (BchN-BchB) is the catalytic component of the complex. This Rhodopseudomonas palustris (strain TIE-1) protein is Light-independent protochlorophyllide reductase subunit B.